A 233-amino-acid polypeptide reads, in one-letter code: Adenosine 5'-phosphosulfate reductase (233 aa).

[4Fe-4S] cluster contacts are provided by Cys120, Cys121, Cys203, and Cys206. The active-site Nucleophile; cysteine thiosulfonate intermediate is the Cys229.

It belongs to the PAPS reductase family. CysH subfamily. [4Fe-4S] cluster serves as cofactor.

Its subcellular location is the cytoplasm. It catalyses the reaction [thioredoxin]-disulfide + sulfite + AMP + 2 H(+) = adenosine 5'-phosphosulfate + [thioredoxin]-dithiol. The protein operates within sulfur metabolism; hydrogen sulfide biosynthesis; sulfite from sulfate. In terms of biological role, catalyzes the formation of sulfite from adenosine 5'-phosphosulfate (APS) using thioredoxin as an electron donor. This chain is Adenosine 5'-phosphosulfate reductase, found in Bacillus velezensis (strain DSM 23117 / BGSC 10A6 / LMG 26770 / FZB42) (Bacillus amyloliquefaciens subsp. plantarum).